Consider the following 600-residue polypeptide: Lamin-B2 (600 aa).

The tract at residues 2–27 (SGTPIRGTPGGTPLSPTRISRLQEKE) is head. S16 is modified (phosphoserine; by CDK1). The region spanning 25-381 (EKEELRQLND…KLLEGEEERL (357 aa)) is the IF rod domain. The coil 1A stretch occupies residues 28 to 64 (ELRQLNDRLAVYIDRVRALELENDRLLVKISEKEEVT). Positions 75 to 212 (YESELADARR…NVFEEEIRET (138 aa)) are coil 1B. A coil 2 region spans residues 237 to 379 (QALEDLRNQH…YRKLLEGEEE (143 aa)). Disordered regions lie at residues 377 to 449 (EEER…QMSQ) and 568 to 600 (ENEEEEDEADFGEEDLFNQQGDPRTTSRGCLVM). The tract at residues 380–600 (RLKLSPSPSS…RTTSRGCLVM (221 aa)) is tail. The span at 383–410 (LSPSPSSRVTVSRATSSSSSSSTSLVRS) shows a compositional bias: low complexity. S386 is modified (phosphoserine). The Nuclear localization signal motif lies at 414 to 419 (KRRRIE). In terms of domain architecture, LTD spans 445 to 562 (FQMSQQASAT…EEVAVRTVTK (118 aa)). Acidic residues predominate over residues 569-583 (NEEEEDEADFGEEDL). The segment covering 584–600 (FNQQGDPRTTSRGCLVM) has biased composition (polar residues). C597 carries the post-translational modification Cysteine methyl ester. A lipid anchor (S-farnesyl cysteine) is attached at C597. Residues 598-600 (LVM) constitute a propeptide, removed in mature form.

This sequence belongs to the intermediate filament family. Homodimer. Lamin dimers then assemble into dimeric head-to-tail polymers. Ultimately, two head-to-tail polymers assemble laterally into a protofilament with a uniformly shaped rod of 3.5 nm in diameter. In terms of processing, phosphorylation plays a key role in lamin organization, subcellular localization and nuclear envelope disintegration. Phosphorylation by CDK1 at Ser-16 at the onset of mitosis drives lamin disassembly and nuclear envelope breakdown.

Its subcellular location is the nucleus lamina. It localises to the nucleus envelope. The protein resides in the nucleus. The protein localises to the nucleoplasm. It is found in the nucleus matrix. Lamins are intermediate filament proteins that assemble into a filamentous meshwork, and which constitute the major components of the nuclear lamina, a fibrous layer on the nucleoplasmic side of the inner nuclear membrane. Lamins provide a framework for the nuclear envelope, bridging the nuclear envelope and chromatin. Plays an important role in nuclear assembly, chromatin organization, nuclear membrane and telomere dynamics. This chain is Lamin-B2 (LMNB2), found in Gallus gallus (Chicken).